The sequence spans 2278 residues: Protein Ycf2 (2278 aa).

It belongs to the Ycf2 family.

It is found in the plastid. It localises to the chloroplast stroma. The protein resides in the chromoplast stroma. Probable ATPase of unknown function. Its presence in a non-photosynthetic plant (Epifagus virginiana) and experiments in tobacco indicate that it has an essential function which is probably not related to photosynthesis. This chain is Protein Ycf2 (ycf2-A), found in Solanum lycopersicum (Tomato).